The following is a 130-amino-acid chain: Small ribosomal subunit protein uS8 (130 aa).

The protein belongs to the universal ribosomal protein uS8 family. As to quaternary structure, part of the 30S ribosomal subunit. Contacts proteins S5 and S12.

Functionally, one of the primary rRNA binding proteins, it binds directly to 16S rRNA central domain where it helps coordinate assembly of the platform of the 30S subunit. This is Small ribosomal subunit protein uS8 from Buchnera aphidicola subsp. Cinara cedri (strain Cc).